Here is a 382-residue protein sequence, read N- to C-terminus: Queuine tRNA-ribosyltransferase (382 aa).

The active-site Proton acceptor is the Asp-93. Substrate contacts are provided by residues 93–97 (DSGGF), Asp-147, Gln-191, and Gly-218. Residues 249–255 (GVGKPED) are RNA binding. Asp-268 functions as the Nucleophile in the catalytic mechanism. The segment at 273–277 (TRNAR) is RNA binding; important for wobble base 34 recognition. The Zn(2+) site is built by Cys-306, Cys-308, Cys-311, and His-337.

It belongs to the queuine tRNA-ribosyltransferase family. In terms of assembly, homodimer. Within each dimer, one monomer is responsible for RNA recognition and catalysis, while the other monomer binds to the replacement base PreQ1. The cofactor is Zn(2+).

The catalysed reaction is 7-aminomethyl-7-carbaguanine + guanosine(34) in tRNA = 7-aminomethyl-7-carbaguanosine(34) in tRNA + guanine. It functions in the pathway tRNA modification; tRNA-queuosine biosynthesis. Catalyzes the base-exchange of a guanine (G) residue with the queuine precursor 7-aminomethyl-7-deazaguanine (PreQ1) at position 34 (anticodon wobble position) in tRNAs with GU(N) anticodons (tRNA-Asp, -Asn, -His and -Tyr). Catalysis occurs through a double-displacement mechanism. The nucleophile active site attacks the C1' of nucleotide 34 to detach the guanine base from the RNA, forming a covalent enzyme-RNA intermediate. The proton acceptor active site deprotonates the incoming PreQ1, allowing a nucleophilic attack on the C1' of the ribose to form the product. After dissociation, two additional enzymatic reactions on the tRNA convert PreQ1 to queuine (Q), resulting in the hypermodified nucleoside queuosine (7-(((4,5-cis-dihydroxy-2-cyclopenten-1-yl)amino)methyl)-7-deazaguanosine). In Haemophilus influenzae (strain PittEE), this protein is Queuine tRNA-ribosyltransferase.